The following is a 134-amino-acid chain: Phosphoribosyl-AMP cyclohydrolase (134 aa).

A Mg(2+)-binding site is contributed by Asp77. Cys78 contributes to the Zn(2+) binding site. The Mg(2+) site is built by Asp79 and Asp81. 2 residues coordinate Zn(2+): Cys95 and Cys102.

The protein belongs to the PRA-CH family. Homodimer. Requires Mg(2+) as cofactor. It depends on Zn(2+) as a cofactor.

The protein resides in the cytoplasm. The enzyme catalyses 1-(5-phospho-beta-D-ribosyl)-5'-AMP + H2O = 1-(5-phospho-beta-D-ribosyl)-5-[(5-phospho-beta-D-ribosylamino)methylideneamino]imidazole-4-carboxamide. The protein operates within amino-acid biosynthesis; L-histidine biosynthesis; L-histidine from 5-phospho-alpha-D-ribose 1-diphosphate: step 3/9. Its function is as follows. Catalyzes the hydrolysis of the adenine ring of phosphoribosyl-AMP. This is Phosphoribosyl-AMP cyclohydrolase from Pseudomonas paraeruginosa (strain DSM 24068 / PA7) (Pseudomonas aeruginosa (strain PA7)).